Consider the following 140-residue polypeptide: Phosphoribosyl-AMP cyclohydrolase (140 aa).

Mg(2+) is bound at residue D85. A Zn(2+)-binding site is contributed by C86. D87 and D89 together coordinate Mg(2+). 2 residues coordinate Zn(2+): C102 and C109.

The protein belongs to the PRA-CH family. As to quaternary structure, homodimer. The cofactor is Mg(2+). Zn(2+) serves as cofactor.

The protein resides in the cytoplasm. The catalysed reaction is 1-(5-phospho-beta-D-ribosyl)-5'-AMP + H2O = 1-(5-phospho-beta-D-ribosyl)-5-[(5-phospho-beta-D-ribosylamino)methylideneamino]imidazole-4-carboxamide. It participates in amino-acid biosynthesis; L-histidine biosynthesis; L-histidine from 5-phospho-alpha-D-ribose 1-diphosphate: step 3/9. In terms of biological role, catalyzes the hydrolysis of the adenine ring of phosphoribosyl-AMP. The protein is Phosphoribosyl-AMP cyclohydrolase of Bradyrhizobium diazoefficiens (strain JCM 10833 / BCRC 13528 / IAM 13628 / NBRC 14792 / USDA 110).